Consider the following 196-residue polypeptide: Large ribosomal subunit protein eL15 (196 aa).

2 disordered regions span residues 72 to 93 and 163 to 196; these read SARKRRHKAGRRSKRQGVTRIT and GLTGAGRRNRGLSGKGKGSEKTRPSLRSNGGKGK.

The protein belongs to the eukaryotic ribosomal protein eL15 family. As to quaternary structure, part of the 50S ribosomal subunit. Interacts with protein L7Ae and weakly with L44e.

This is Large ribosomal subunit protein eL15 (rpl15e) from Haloarcula marismortui (strain ATCC 43049 / DSM 3752 / JCM 8966 / VKM B-1809) (Halobacterium marismortui).